The primary structure comprises 147 residues: D-aminoacyl-tRNA deacylase (147 aa).

The Gly-cisPro motif, important for rejection of L-amino acids signature appears at 136–137 (GP).

This sequence belongs to the DTD family. Homodimer.

It is found in the cytoplasm. The catalysed reaction is glycyl-tRNA(Ala) + H2O = tRNA(Ala) + glycine + H(+). It catalyses the reaction a D-aminoacyl-tRNA + H2O = a tRNA + a D-alpha-amino acid + H(+). An aminoacyl-tRNA editing enzyme that deacylates mischarged D-aminoacyl-tRNAs. Also deacylates mischarged glycyl-tRNA(Ala), protecting cells against glycine mischarging by AlaRS. Acts via tRNA-based rather than protein-based catalysis; rejects L-amino acids rather than detecting D-amino acids in the active site. By recycling D-aminoacyl-tRNA to D-amino acids and free tRNA molecules, this enzyme counteracts the toxicity associated with the formation of D-aminoacyl-tRNA entities in vivo and helps enforce protein L-homochirality. In Persephonella marina (strain DSM 14350 / EX-H1), this protein is D-aminoacyl-tRNA deacylase.